A 353-amino-acid polypeptide reads, in one-letter code: Photosystem II D2 protein (353 aa).

Threonine 2 carries the N-acetylthreonine modification. The residue at position 2 (threonine 2) is a Phosphothreonine. Residues 41-61 (CAYFALGGWFTGTTFVTSWYT) traverse the membrane as a helical segment. Position 118 (histidine 118) interacts with chlorophyll a. A helical membrane pass occupies residues 125–141 (GFMLRQFELARSVQLRP). Pheophytin a is bound by residues glutamine 130 and asparagine 143. A helical membrane pass occupies residues 153–166 (VFVSVSLIYPLGQA). Histidine 198 is a binding site for chlorophyll a. Residues 208–228 (AALLCAIHGATVENTLFEDGD) traverse the membrane as a helical segment. A plastoquinone contacts are provided by histidine 215 and phenylalanine 262. Histidine 215 lines the Fe cation pocket. Histidine 269 is a binding site for Fe cation. A helical membrane pass occupies residues 279–295 (GLWMSAIGVVGLALNLR).

This sequence belongs to the reaction center PufL/M/PsbA/D family. As to quaternary structure, PSII is composed of 1 copy each of membrane proteins PsbA, PsbB, PsbC, PsbD, PsbE, PsbF, PsbH, PsbI, PsbJ, PsbK, PsbL, PsbM, PsbT, PsbX, PsbY, PsbZ, Psb30/Ycf12, at least 3 peripheral proteins of the oxygen-evolving complex and a large number of cofactors. It forms dimeric complexes. The D1/D2 heterodimer binds P680, chlorophylls that are the primary electron donor of PSII, and subsequent electron acceptors. It shares a non-heme iron and each subunit binds pheophytin, quinone, additional chlorophylls, carotenoids and lipids. There is also a Cl(-1) ion associated with D1 and D2, which is required for oxygen evolution. The PSII complex binds additional chlorophylls, carotenoids and specific lipids. is required as a cofactor.

The protein resides in the plastid. It localises to the chloroplast thylakoid membrane. It carries out the reaction 2 a plastoquinone + 4 hnu + 2 H2O = 2 a plastoquinol + O2. Photosystem II (PSII) is a light-driven water:plastoquinone oxidoreductase that uses light energy to abstract electrons from H(2)O, generating O(2) and a proton gradient subsequently used for ATP formation. It consists of a core antenna complex that captures photons, and an electron transfer chain that converts photonic excitation into a charge separation. The D1/D2 (PsbA/PsbD) reaction center heterodimer binds P680, the primary electron donor of PSII as well as several subsequent electron acceptors. D2 is needed for assembly of a stable PSII complex. This chain is Photosystem II D2 protein, found in Angiopteris evecta (Mule's foot fern).